The chain runs to 982 residues: Probable DNA-directed RNA polymerase (982 aa).

This sequence belongs to the RNA polymerase beta chain family.

It catalyses the reaction RNA(n) + a ribonucleoside 5'-triphosphate = RNA(n+1) + diphosphate. The presence of the two linear plasmids, termed pGKL1 and pGKL2, in strains of Kluyveromyces lactis confers the killer phenotype to the host cell, by promoting the secretion of a toxin able to inhibit the growth of sensitive strains. The chain is Probable DNA-directed RNA polymerase from Kluyveromyces lactis (strain ATCC 8585 / CBS 2359 / DSM 70799 / NBRC 1267 / NRRL Y-1140 / WM37) (Yeast).